A 439-amino-acid polypeptide reads, in one-letter code: Eukaryotic translation initiation factor 2 subunit gamma (439 aa).

One can recognise a tr-type G domain in the interval 11 to 215 (QATLNIGTIG…FIVNYIPEPV (205 aa)). The G1 stretch occupies residues 20–27 (GHVAHGKS). GTP is bound at residue 23–28 (AHGKST). Positions 48–52 (NITIK) are G2. Residues 103–106 (DCPG) form a G3 region. GTP-binding positions include 159–162 (NKID) and 193–195 (AAQ). The G4 stretch occupies residues 159–162 (NKID). Positions 193–195 (AAQ) are G5. Positions 415–427 (GEIKDGTCIEPEY) are interacts with CDC123.

The protein belongs to the TRAFAC class translation factor GTPase superfamily. Classic translation factor GTPase family. EIF2G subfamily. As to quaternary structure, eukaryotic translation initiation factor 2 eIF2 is a heterotrimeric complex composed of an alpha, a beta and a gamma subunit. The factors eIF-1, eIF-2, eIF-3, TIF5/eIF-5 and methionyl-tRNAi form a multifactor complex (MFC) that may bind to the 40S ribosome.

The protein localises to the cytoplasm. It localises to the cytosol. The catalysed reaction is GTP + H2O = GDP + phosphate + H(+). In terms of biological role, as a subunit of eukaryotic initiation factor 2 eIF2, involved in the early steps of protein synthesis. In the presence of GTP, eIF-2 forms a ternary complex with initiator tRNA Met-tRNAi and then recruits the 40S ribosomal complex and initiation factors eIF-1, eIF-1A and eIF-3 to form the 43S pre-initiation complex (43S PIC), a step that determines the rate of protein translation. The 43S PIC binds to mRNA and scans downstream to the initiation codon, where it forms a 48S initiation complex by codon-anticodon base pairing. This leads to the displacement of eIF-1 to allow GTPase-activating protein (GAP) eIF-5-mediated hydrolysis of eIF2-bound GTP. Hydrolysis of GTP and release of Pi, which makes GTP hydrolysis irreversible, causes the release of the eIF-2-GDP binary complex from the 40S subunit, an event that is essential for the subsequent joining of the 60S ribosomal subunit to form an elongation-competent 80S ribosome. In order for eIF-2 to recycle and catalyze another round of initiation, the GDP bound to eIF-2 must be exchanged with GTP by way of a reaction catalyzed by GDP-GTP exchange factor (GEF) eIF-2B. The polypeptide is Eukaryotic translation initiation factor 2 subunit gamma (Encephalitozoon cuniculi (strain GB-M1) (Microsporidian parasite)).